A 107-amino-acid chain; its full sequence is UPF0235 protein RPC_0058 (107 aa).

It belongs to the UPF0235 family.

In Rhodopseudomonas palustris (strain BisB18), this protein is UPF0235 protein RPC_0058.